A 235-amino-acid chain; its full sequence is Pyridoxine 5'-phosphate synthase (235 aa).

Asn6 contacts 3-amino-2-oxopropyl phosphate. 8–9 is a binding site for 1-deoxy-D-xylulose 5-phosphate; sequence DH. Arg17 provides a ligand contact to 3-amino-2-oxopropyl phosphate. Catalysis depends on His42, which acts as the Proton acceptor. Residues Arg44 and His49 each coordinate 1-deoxy-D-xylulose 5-phosphate. Glu69 (proton acceptor) is an active-site residue. A 1-deoxy-D-xylulose 5-phosphate-binding site is contributed by Thr99. Catalysis depends on His188, which acts as the Proton donor. Residues Gly189 and 210 to 211 contribute to the 3-amino-2-oxopropyl phosphate site; that span reads GH.

Belongs to the PNP synthase family. As to quaternary structure, homooctamer; tetramer of dimers.

It is found in the cytoplasm. It catalyses the reaction 3-amino-2-oxopropyl phosphate + 1-deoxy-D-xylulose 5-phosphate = pyridoxine 5'-phosphate + phosphate + 2 H2O + H(+). It functions in the pathway cofactor biosynthesis; pyridoxine 5'-phosphate biosynthesis; pyridoxine 5'-phosphate from D-erythrose 4-phosphate: step 5/5. Catalyzes the complicated ring closure reaction between the two acyclic compounds 1-deoxy-D-xylulose-5-phosphate (DXP) and 3-amino-2-oxopropyl phosphate (1-amino-acetone-3-phosphate or AAP) to form pyridoxine 5'-phosphate (PNP) and inorganic phosphate. The chain is Pyridoxine 5'-phosphate synthase from Wolbachia pipientis subsp. Culex pipiens (strain wPip).